The sequence spans 180 residues: Large ribosomal subunit protein uL5 (180 aa).

This sequence belongs to the universal ribosomal protein uL5 family. Forms a bridge to the 30S subunit in the 70S ribosome. Part of the 50S ribosomal subunit; part of the 5S rRNA/L5/L18/L25 (CTC) subcomplex. Is known to contact the 5S rRNA, 23S rRNA and the P site tRNA.

This is one of the proteins that bind and probably mediate the attachment of the 5S RNA into the large ribosomal subunit, where it forms part of the central protuberance. In the 70S ribosome it contacts protein S13 of the 30S subunit (bridge B1b), connecting the 2 subunits; this bridge is implicated in subunit movement. Contacts the P site tRNA; the 5S rRNA and some of its associated proteins might help stabilize positioning of ribosome-bound tRNAs. The sequence is that of Large ribosomal subunit protein uL5 (rplE) from Deinococcus radiodurans (strain ATCC 13939 / DSM 20539 / JCM 16871 / CCUG 27074 / LMG 4051 / NBRC 15346 / NCIMB 9279 / VKM B-1422 / R1).